The sequence spans 226 residues: Probable thiol methyltransferase 2 (226 aa).

Residues Trp29, Trp33, Trp40, and Gly67 each coordinate S-adenosyl-L-methionine. Ser79 is modified (phosphoserine). Residues Asp88, 116–117, and Tyr132 each bind S-adenosyl-L-methionine; that span reads DF.

It belongs to the class I-like SAM-binding methyltransferase superfamily. TPMT family.

The catalysed reaction is a thiol + S-adenosyl-L-methionine = a methyl thioether + S-adenosyl-L-homocysteine + H(+). S-adenosyl-L-methionine-dependent methyltransferase. This Arabidopsis thaliana (Mouse-ear cress) protein is Probable thiol methyltransferase 2 (HOL3).